Here is a 216-residue protein sequence, read N- to C-terminus: UPF0711 protein C18orf21 homolog (216 aa).

Disordered regions lie at residues 118–185 and 197–216; these read RSFL…ASKT and SQSE…LSSL. Residues 124–136 show a composition bias toward polar residues; it reads LKSNPTTPTSKLS. Ser126 carries the post-translational modification Phosphoserine. 2 positions are modified to phosphothreonine: Thr130 and Thr139. 2 stretches are compositionally biased toward polar residues: residues 145–157 and 167–182; these read PSSA…SGSK and TPTS…SKNA. Positions 200 to 209 are enriched in basic and acidic residues; it reads ESKKNPKMDF.

The protein belongs to the UPF0711 family.

In Bos taurus (Bovine), this protein is UPF0711 protein C18orf21 homolog.